The sequence spans 161 residues: MSIVTKSIVNADAEARYLSPGELDRIKSFVAGGQQRLRIAQALTDNRERLVKQAGDQLFQKRPDVVSPGGNAYGQEMTATCLRDLDYYLRLVTYGIVAGDVTPIEEIGVIGVREMYKSLGTPIEAVGEGVRALKNAASTLLSAEDAAEAGSYFDYVVGALQ.

Residue Asn71 is modified to N4-methylasparagine. Cys81 is a binding site for (2R,3E)-phycocyanobilin.

Belongs to the phycobiliprotein family. As to quaternary structure, heterohexamer of two alpha chains, one alpha-B chain and three beta chains. In terms of processing, contains one covalently linked phycocyanobilin chromophore. The chromophore is added by phycocyanobilin lyase CpcS 1.

It is found in the cellular thylakoid membrane. Light-harvesting photosynthetic bile pigment-protein from the phycobiliprotein complex. Allophycocyanin has a maximum absorption at approximately 650 to 653 nanometers. The sequence is that of Allophycocyanin subunit alpha 1 (apcA1) from Nostoc sp. (strain PCC 7120 / SAG 25.82 / UTEX 2576).